A 252-amino-acid polypeptide reads, in one-letter code: HTH-type transcriptional regulator XynR (252 aa).

The HTH iclR-type domain maps to 4-66 (IQSVERALQI…PENGKYRLGM (63 aa)). The H-T-H motif DNA-binding region spans 25-45 (KITDISKLMGLSKSTLHSLLK). The region spanning 81–250 (IRQKAKGWLT…GLALSRALGY (170 aa)) is the IclR-ED domain.

Activity may be controlled by xylonate. Its function is as follows. Involved in regulation of xylonate catabolism. Represses the expression of both yagA and yagEF operons. Binds mainly at a single site within the spacer of the bidirectional transcription units yagA and yagEF. The chain is HTH-type transcriptional regulator XynR from Escherichia coli (strain K12).